Here is a 264-residue protein sequence, read N- to C-terminus: Putative hydro-lyase RBAM_004300 (264 aa).

This sequence belongs to the D-glutamate cyclase family.

This Bacillus velezensis (strain DSM 23117 / BGSC 10A6 / LMG 26770 / FZB42) (Bacillus amyloliquefaciens subsp. plantarum) protein is Putative hydro-lyase RBAM_004300.